The chain runs to 34 residues: Omega-ctenitoxin-Pn2a (34 aa).

3 disulfide bridges follow: C2-C16, C9-C26, and C15-C28.

The protein belongs to the neurotoxin 02 (plectoxin) family. 01 (Tx3) subfamily. Expressed by the venom gland.

Its subcellular location is the secreted. Functionally, inhibits all known high-voltage activated calcium channels (L-, P/Q- and R-type currents) (Cav), and most effectively the P/Q- (Cav2.1/CACNA1A) and R-type (Cav2.3/CACNA1E) currents. In rat brain, inhibits glutamate release, neuronal death and loss of neurotransmission in the hippocampus resulting from ischemia. In vivo, induces rapid general flaccid paralysis followed by death in 10-30 minutes at dose levels of 5 ug per mouse. The polypeptide is Omega-ctenitoxin-Pn2a (Phoneutria nigriventer (Brazilian armed spider)).